The sequence spans 592 residues: MNNGRIVRINGPLVVADNMKNAQMYEVVEVGEPRLIGEITRIEGDRAFIQVYEDTSGIKPNEPVYRTGAPLSIELGPGLIGKIFDGLQRPLDSIKELTKSPFIARGIKVPSVDRKTKWHFIPKVKKGDKIEGGDIIGIVNETPLVEHRILVPPYVHGTLKEIVAEGDYTVEDPIAVVDMNGDEVPIKLMQRWPVRIPRPFKEKLEPTEPLLTGTRVLDTIFPIAKGGTAAIPGPFGSGKTVTLQSLAKWSAAKIVIYVGCGERGNEMTDELRQFPSLKDPWTGRPLLERTILVANTSNMPVAAREASIYVGITMAEYFRDQGYDTLLVADSTSRWAEALRDLGGRMEEMPAEEGFPSYLPSRLAEYYERAGRVKTVGKPERFGSVTVASAVSPPGGDFTEPVTSQTLRFVKVFWPLDVSLAQARHYPAINWLQGFSAYVDLVANWWNTNVDPKWREMRDMMVRTLIREDELRQIVRLVGPESLAEKDKLVLETARLIKEAFLKQNAYDDIDAFSSPQKQARVMRLIYLFNTHASRLVERGIPTKKIVDSMGQLLPEIIRSKAAIKNDELNKYDELERKLISVFENLEKEAGT.

233-240 (GPFGSGKT) provides a ligand contact to ATP.

The protein belongs to the ATPase alpha/beta chains family. As to quaternary structure, has multiple subunits with at least A(3), B(3), C, D, E, F, H, I and proteolipid K(x).

The protein resides in the cell membrane. It carries out the reaction ATP + H2O + 4 H(+)(in) = ADP + phosphate + 5 H(+)(out). Functionally, component of the A-type ATP synthase that produces ATP from ADP in the presence of a proton gradient across the membrane. The A chain is the catalytic subunit. This Saccharolobus islandicus (strain M.16.27) (Sulfolobus islandicus) protein is A-type ATP synthase subunit A.